The sequence spans 225 residues: Elongation factor 1-beta (225 aa).

The 83-residue stretch at 2-84 (GFGDLKSPAG…ALGKYGPADV (83 aa)) folds into the GST C-terminal domain. At K7 the chain carries N6-acetyllysine. S8 and S42 each carry phosphoserine. Residues 78 to 115 (KYGPADVEDTTGSGATDSKDDDDIDLFGSDDEEESEEA) form a disordered region. 2 positions are modified to phosphothreonine: T88 and T93. Residues S95 and S106 each carry the phosphoserine modification. A compositionally biased stretch (acidic residues) spans 96 to 113 (KDDDDIDLFGSDDEEESE). A Glycyl lysine isopeptide (Lys-Gly) (interchain with G-Cter in SUMO2) cross-link involves residue K147. Residue S174 is modified to Phosphoserine.

Belongs to the EF-1-beta/EF-1-delta family. In terms of assembly, EF-1 is composed of 4 subunits: alpha, beta (alpha subunit of the eEF1B subcomplex), delta (beta subunit of the eEF1B subcomplex), and gamma (gamma subunit of the eEF1B subcomplex). Interacts with elongation factor EEF1A1. In terms of processing, phosphorylation affects the GDP/GTP exchange rate.

In terms of biological role, catalytic subunit of the guanine nucleotide exchange factor (GEF) (eEF1B subcomplex) of the eukaryotic elongation factor 1 complex (eEF1). Stimulates the exchange of GDP for GTP on elongation factor 1A (eEF1A), probably by displacing GDP from the nucleotide binding pocket in eEF1A. The sequence is that of Elongation factor 1-beta (EEF1B2) from Homo sapiens (Human).